The sequence spans 411 residues: Serine hydroxymethyltransferase (411 aa).

120–122 (GHL) provides a ligand contact to (6S)-5,6,7,8-tetrahydrofolate. Position 225 is an N6-(pyridoxal phosphate)lysine (lysine 225). 350-352 (SPF) is a (6S)-5,6,7,8-tetrahydrofolate binding site.

It belongs to the SHMT family. Homodimer. Requires pyridoxal 5'-phosphate as cofactor.

It is found in the cytoplasm. The catalysed reaction is (6R)-5,10-methylene-5,6,7,8-tetrahydrofolate + glycine + H2O = (6S)-5,6,7,8-tetrahydrofolate + L-serine. It participates in one-carbon metabolism; tetrahydrofolate interconversion. It functions in the pathway amino-acid biosynthesis; glycine biosynthesis; glycine from L-serine: step 1/1. Catalyzes the reversible interconversion of serine and glycine with tetrahydrofolate (THF) serving as the one-carbon carrier. This reaction serves as the major source of one-carbon groups required for the biosynthesis of purines, thymidylate, methionine, and other important biomolecules. Also exhibits THF-independent aldolase activity toward beta-hydroxyamino acids, producing glycine and aldehydes, via a retro-aldol mechanism. This chain is Serine hydroxymethyltransferase, found in Lactobacillus johnsonii (strain CNCM I-12250 / La1 / NCC 533).